Here is a 225-residue protein sequence, read N- to C-terminus: Transcription factor HES-7 (225 aa).

A bHLH domain is found at Gly12–Arg69. In terms of domain architecture, Orange spans Tyr92–Leu122. Residues Tyr125–Pro225 are disordered. The segment covering Leu147–Leu158 has biased composition (low complexity). Residues Ala212 to Pro225 show a composition bias toward pro residues. The short motif at Trp221–Trp224 is the WRPW motif element.

As to quaternary structure, transcription repression requires formation of a complex with a corepressor protein of the Groucho/TLE family.

The protein resides in the nucleus. In terms of biological role, transcriptional repressor. Represses transcription from both N box- and E box-containing promoters. May with HES1, cooperatively regulate somite formation in the presomitic mesoderm (PSM). May function as a segmentation clock, which is essential for coordinated somite segmentation. In Homo sapiens (Human), this protein is Transcription factor HES-7 (HES7).